The following is a 338-amino-acid chain: D-erythrose-4-phosphate dehydrogenase (338 aa).

12-13 (RI) provides a ligand contact to NAD(+). Substrate is bound by residues 154–156 (SCT), Arg200, 213–214 (TK), and Arg236. Catalysis depends on Cys155, which acts as the Nucleophile. An NAD(+)-binding site is contributed by Asn318.

The protein belongs to the glyceraldehyde-3-phosphate dehydrogenase family. Epd subfamily. As to quaternary structure, homotetramer.

Its subcellular location is the cytoplasm. The catalysed reaction is D-erythrose 4-phosphate + NAD(+) + H2O = 4-phospho-D-erythronate + NADH + 2 H(+). Its pathway is cofactor biosynthesis; pyridoxine 5'-phosphate biosynthesis; pyridoxine 5'-phosphate from D-erythrose 4-phosphate: step 1/5. Its function is as follows. Catalyzes the NAD-dependent conversion of D-erythrose 4-phosphate to 4-phosphoerythronate. The polypeptide is D-erythrose-4-phosphate dehydrogenase (Tolumonas auensis (strain DSM 9187 / NBRC 110442 / TA 4)).